Reading from the N-terminus, the 1078-residue chain is Rho family-interacting cell polarization regulator 2 (1078 aa).

Ser46 and Ser62 each carry phosphoserine. An involved in cell filopodia formation region spans residues 80–138; that stretch reads MHNLGHKNNNTPKEPQPKRVEEVYRALKNGLDEYLEFHQTELDKLTAQLKDMKRNSRLG. A coiled-coil region spans residues 108–137; that stretch reads NGLDEYLEFHQTELDKLTAQLKDMKRNSRL. Ser366 is modified (phosphoserine). Over residues 488-508 the composition is skewed to polar residues; it reads SSLSSQNEGTEDSSSASSRNS. The segment at 488–534 is disordered; sequence SSLSSQNEGTEDSSSASSRNSLGEDHEPKSHPKSDTVEPGKPGVATR. Residues 509–525 are compositionally biased toward basic and acidic residues; it reads LGEDHEPKSHPKSDTVE. A Phosphoserine modification is found at Ser582.

The protein belongs to the RIPOR family. As to quaternary structure, homooligomer; homooligomerization is regulated by RHOC and leads to the formation of concatemers through the association of N- and C-termini. Interacts (phosphorylated form) with 14-3-3 proteins; these interactions occur during myogenic cell differentiation and also induces T cell proliferation arrest. Interacts (phosphorylated form) with HDAC6; this interaction occurs during early myogenic differentiation, prevents HDAC6 to deacetylate tubulin and also induces T cell proliferation arrest. Interacts with DYSF; this interaction occurs during early myogenic differentiation. Interacts with MYOF. Interacts (via active GTP- or inactive GDP-bound forms) with RHOA; this interaction is direct, blocks the loading of GTP to RHOA and decreases upon chemokine CCL19 stimulation in primary T lymphocytes. Interacts with RHOC. Interacts (via phosphorylated form) with YWHAB; this interaction occurs in a chemokine-dependent manner and does not compete for binding of RIPOR2 with RHOA nor blocks inhibition of RIPOR2-mediated RHOA activity. Interacts with YWHAE. Interacts with YWHAQ. Post-translationally, phosphorylated. Chemokine-induced phosphorylation in neutrophils occurs in a PKC- and AKT-dependent manner, resulting in RIPOR2 interaction with YWHAB and stabilization. Phosphorylated by PKCA, AKT1 and MAPKAPK1A; in vitro. In terms of tissue distribution, expressed in the cochlea. Expressed in inner hair cells and outer hair cells and Hensen's cells (at protein level). Expressed in the brain, cerebellum, spinal cord, retina, heart, spleen liver, kidney, bladder, muscle and lung. Expressed in the cochlea of the inner ear.

It is found in the cytoplasm. The protein resides in the cytoskeleton. It localises to the cell projection. The protein localises to the filopodium. Its subcellular location is the stereocilium. It is found in the stereocilium membrane. The protein resides in the apical cell membrane. Acts as an inhibitor of the small GTPase RHOA and plays several roles in the regulation of myoblast and hair cell differentiation, lymphocyte T proliferation and neutrophil polarization. Plays a role in fetal mononuclear myoblast differentiation by promoting filopodia and myotube formation. Maintains naive T lymphocytes in a quiescent state and prevents chemokine-induced T lymphocyte responses, such as cell adhesion, polarization and migration. Involved also in the regulation of neutrophil polarization, chemotaxis and adhesion. Required for normal development of inner and outer hair cell stereocilia within the cochlea of the inner ear. Plays a role for maintaining the structural organization of the basal domain of stereocilia. Involved in mechanosensory hair cell function. Required for normal hearing. The sequence is that of Rho family-interacting cell polarization regulator 2 from Mus musculus (Mouse).